The primary structure comprises 1072 residues: MEQQQSKNNAHVSKLFVCTAVDCKDDIEEKFERSFVTLQMQISGLSDKEMHDMLSQAVCKDKQHEEISIGFLYIMLTDPSMAPKTYRDVTLVSRDGMNGIVTNLTFLVAEKYTKLTEVARRQLIWLLREFVKHQVLSVENVIWNCLRQAGGGDVSSRNLFLIESLLDIFIEFRTWLEGNPFLVQSTVYSFVRLIEDHANPALMSLRQKEVKFTISLIRERFHDIIPLGRDFVRLLQNVARIPEFEQLWRDILFNPKILNQTFNGIWQLLHIRTSRRFLQCRLLPEMERKISFLASSVKFGNQKRYQDWFQEKYFATPESHSLRSDLIRFIINVIHPTNDMLCSDIIPRWAIIGWLISSCTNPIASANAKLSLFYDWLFFDPAKDNIMNIEPGILVMYHSIRNHPFVSSTLLDFLCRITKNFFVKHEDKIRIGVYNSLKLILEKQVIPNLQPLFESPKLDRELRNLIRDNFREFLSPPANLGQLLYPSTHTVQGHILKKESDQRILHCENADLHETGLINISGTVISVVDEDKKISLVPTDQEIESVFSDGTAENLRRVHNIDENTDDDDDLPLSKVRLKEKPRVELADAIAESFESFVSKRNSYTWEAFLKDFRPLPASAFEEFQLNYVISNTVLILRETLPQQNIFSESKTDEKHLAKSISYPLYGLFRFLYENDEKSKKPFQILLSEICERIPEIGYLLLYFMKIYCKLQTRKNSQQSYQFKTTIYRQICDAADEKIANCLLRDLDMLEKENTNIFLWLLPDIYREFKSIATNNTDLLRITLRCIDARNVRDILYSVAQGKLTIFKQDGLIDCIRESLEFETYEQFCLWQIVQAHDVPLRCIQDLLPELEAGSHPEALSHFLLLLKNEEPTNEIIRLMLSREPKSKGDPFVTSALRFWCQRYEEKLSEIIASLLTSKYPSSSPNKRKRPPKGISVSTSIPSADQVLNHLEHYRRSCRHGTGTGLYVHDMMQRALQSAYSHSNDSTKKQFSDLFALAAEEDTTVGRRGGSGRGRKQPGSKKDVNNHGTSKKTAEMVKTIYSSDENSSEEDWSKSKITQTAKRRKKANNDSD.

Disordered regions lie at residues 920–941 and 1002–1072; these read YPSS…STSI and DTTV…NDSD. A phosphoserine mark is found at Ser-1042, Ser-1043, Ser-1047, and Ser-1048.

It belongs to the Integrator subunit 3 family. In terms of assembly, belongs to the multiprotein complex Integrator, at least composed of IntS1, IntS2, IntS3, IntS4, omd/IntS5, IntS6, defl/IntS7, IntS8, IntS9, IntS10, IntS11, IntS12, asun/IntS13, IntS14 and IntS15. The core complex associates with protein phosphatase 2A subunits mts/PP2A and Pp2A-29B, to form the Integrator-PP2A (INTAC) complex.

It is found in the nucleus. It localises to the cytoplasm. Its function is as follows. Component of the integrator complex, a multiprotein complex that terminates RNA polymerase II (Pol II) transcription in the promoter-proximal region of genes. The integrator complex provides a quality checkpoint during transcription elongation by driving premature transcription termination of transcripts that are unfavorably configured for transcriptional elongation: the complex terminates transcription by (1) catalyzing dephosphorylation of the C-terminal domain (CTD) of Pol II subunit Polr2A/Rbp1 and Spt5, and (2) degrading the exiting nascent RNA transcript via endonuclease activity. The integrator complex is also involved in the 3'-end processing of the U7 snRNA, and also the spliceosomal snRNAs U1, U2, U4 and U5. This chain is Integrator complex subunit 3 homolog (IntS3), found in Drosophila erecta (Fruit fly).